Consider the following 401-residue polypeptide: Flagellin D (401 aa).

Belongs to the bacterial flagellin family.

The protein resides in the secreted. It is found in the bacterial flagellum. In terms of biological role, flagellin is the subunit protein which polymerizes to form the filaments of bacterial flagella. The chain is Flagellin D (flaD) from Rhizobium meliloti (strain 1021) (Ensifer meliloti).